Here is a 323-residue protein sequence, read N- to C-terminus: Transcription factor MYB108 (323 aa).

2 HTH myb-type domains span residues 16–68 (EMDL…LNYL) and 69–123 (RPDV…QKHA). DNA-binding regions (H-T-H motif) lie at residues 44–68 (WNSL…LNYL) and 96–119 (WSKI…RTRV).

As to quaternary structure, interacts with BOI, but not with BRG1. Post-translationally, ubiquitinated in vitro by BOI. In terms of tissue distribution, expressed specifically in flowers. Restricted to anthers in maturing flowers. Strongest expression in the vascular and connective tissue where the anther attaches to the filament. Not detected in pollen.

It localises to the nucleus. Functionally, transcription factor contributing to the regulation of stamen maturation and male fertility in response to jasmonate signaling. Required for correct timing of anther dehiscence. Acts as a negative regulator of abscisic acid-induced cell death. Not involved in the regulation of BOI. Regulated by MYB21 and at a lower level by MYB24. Negatively regulated by the proteasome in an SCF(COI1) E3 ubiquitin-protein ligase complex-dependent manner. This Arabidopsis thaliana (Mouse-ear cress) protein is Transcription factor MYB108 (MYB108).